Consider the following 313-residue polypeptide: Testis-expressed protein 264 (313 aa).

At 1-6 (MSDLLL) the chain is on the lumenal side. The helical; Signal-anchor for type III membrane protein transmembrane segment at 7–31 (LGLIGGLTLLLLLTLLAFAGYSGLL) threads the bilayer. Over 32-313 (AGVEVSAGSP…EPTAPEKGKE (282 aa)) the chain is Cytoplasmic. A disordered region spans residues 193–313 (PEMKETEWKW…EPTAPEKGKE (121 aa)). Polar residues predominate over residues 219 to 247 (DTMSDTSSVSLEVSPGSRETSAATLSPGA). Phosphoserine occurs at positions 239 and 244. Residues 251 to 263 (GWDDGDTRSEHSY) show a composition bias toward basic and acidic residues. A compositionally biased stretch (low complexity) spans 264 to 273 (SESGASGSSF). An LIR motif motif is present at residues 273 to 276 (FEEL).

As to quaternary structure, interacts (via the LIR motif) with ATG8 family proteins MAP1LC3A, MAP1LC3B, GABARAP and GABARAPL1. Interacts with VCP/p97; bridging VCP/p97 to covalent DNA-protein cross-links (DPCs). Interacts with TOP1 (when sumoylated).

Its subcellular location is the endoplasmic reticulum membrane. The protein resides in the cytoplasmic vesicle. The protein localises to the autophagosome. It localises to the cytoplasm. It is found in the cytosol. Its subcellular location is the nucleus. The protein resides in the chromosome. In terms of biological role, major reticulophagy (also called ER-phagy) receptor that acts independently of other candidate reticulophagy receptors to remodel subdomains of the endoplasmic reticulum into autophagosomes upon nutrient stress, which then fuse with lysosomes for endoplasmic reticulum turnover. The ATG8-containing isolation membrane (IM) cradles a tubular segment of TEX264-positive ER near a three-way junction, allowing the formation of a synapse of 2 juxtaposed membranes with trans interaction between the TEX264 and ATG8 proteins. Expansion of the IM would extend the capture of ER, possibly through a 'zipper-like' process involving continued trans TEX264-ATG8 interactions, until poorly understood mechanisms lead to the fission of relevant membranes and, ultimately, autophagosomal membrane closure. Also involved in the repair of covalent DNA-protein cross-links (DPCs) during DNA synthesis: acts by bridging VCP/p97 to covalent DNA-protein cross-links (DPCs) and initiating resolution of DPCs by SPRTN. This chain is Testis-expressed protein 264, found in Homo sapiens (Human).